The sequence spans 666 residues: MAADYDKLFRPHEGMEAPDDMAAQPFFDPSASFPPAPASANLPKPNGQTPPPTSDDLSERFVSAPPPPPPPPPPPPPTPMPIAAGEPPSPEPAASKPPTPPMPIAGPEPAPPKPPTPPMPIAGPEPAPPKPPTPPMPIAGPAPTPTESQLAPPRPPTPQTPTGAPQQPESPAPHVPSHGPHQPRRTAPAPPWAKMPIGEPPPAPSRPSASPAEPPTRPAPQHSRRARRGHRYRTDTERNVGKVATGPSIQARLRAEEASGAQLAPGTEPSPAPLGQPRSYLAPPTRPAPTEPPPSPSPQRNSGRRAERRVHPDLAAQHAAAQPDSITAATTGGRRRKRAAPDLDATQKSLRPAAKGPKVKKVKPQKPKATKPPKVVSQRGWRHWVHALTRINLGLSPDEKYELDLHARVRRNPRGSYQIAVVGLKGGAGKTTLTAALGSTLAQVRADRILALDADPGAGNLADRVGRQSGATIADVLAEKELSHYNDIRAHTSVNAVNLEVLPAPEYSSAQRALSDADWHFIADPASRFYNLVLADCGAGFFDPLTRGVLSTVSGVVVVASVSIDGAQQASVALDWLRNNGYQDLASRACVVINHIMPGEPNVAVKDLVRHFEQQVQPGRVVVMPWDRHIAAGTEISLDLLDPIYKRKVLELAAALSDDFERAGRR.

A compositionally biased stretch (basic and acidic residues) spans 1 to 15 (MAADYDKLFRPHEGM). The segment at 1-378 (MAADYDKLFR…ATKPPKVVSQ (378 aa)) is disordered. Residues 22-31 (AAQPFFDPSA) are compositionally biased toward low complexity. Pro residues-rich tracts occupy residues 64–80 (APPPPPPPPPPPPPTPM), 87–144 (PPSP…PAPT), and 188–205 (PAPPWAKMPIGEPPPAPS). Residues 222–231 (HSRRARRGHR) are compositionally biased toward basic residues. Over residues 284 to 297 (PTRPAPTEPPPSPS) the composition is skewed to pro residues. The segment covering 357–371 (PKVKKVKPQKPKATK) has biased composition (basic residues). Position 424-431 (424-431 (LKGGAGKT)) interacts with ATP.

In terms of biological role, required to repress ESX-1-mediated secretion under low ATP conditions. This function requires the ATP-binding motif. The chain is ESX-1 secretion-associated protein EspI from Mycobacterium tuberculosis (strain CDC 1551 / Oshkosh).